Reading from the N-terminus, the 1069-residue chain is Regulator of nonsense transcripts 1 (1069 aa).

The tract at residues 1 to 86 is disordered; that stretch reads MDDSDDEYSR…SEKSLTEEQH (86 aa). Residues 28–50 show a composition bias toward polar residues; the sequence is IGNTQDSQFAYEQFSVPTQSSQA. The span at 51–65 shows a compositional bias: low complexity; the sequence is TDLLPGGTDGTTNDL. The span at 77 to 86 shows a compositional bias: basic and acidic residues; sequence SEKSLTEEQH. In terms of domain architecture, Upf1 CH-rich spans 87 to 244; sequence EQKLPEHACR…VRMEELWRDH (158 aa). Positions 95, 98, 109, 112, 117, 127, 131, 137, 155, 158, 181, and 185 each coordinate Zn(2+). Residues 95 to 127 form a C3H region; sequence CRYCGISDPLCVAKCTVCRKWFCNSNDGTSGGH. A CC/SHH/C region spans residues 109 to 137; that stretch reads CTVCRKWFCNSNDGTSGGHIVHHMVRSQH. The C4 stretch occupies residues 155–185; sequence CYRCGSKNVFNLGFIPGKKDQVVVIICRTPC. ATP-binding positions include glutamine 450, 467 to 474, glutamine 639, tyrosine 676, and glutamate 807; that span reads GPPGTGKT. The interval 966-1069 is disordered; that stretch reads ARNQKDRRRG…MDDLLFSQDC (104 aa). Over residues 991–1013 the composition is skewed to low complexity; sequence SQGMMSQQSQQYPPQGASSQSQY.

This sequence belongs to the DNA2/NAM7 helicase family. Post-translationally, phosphorylated probably by smg-1. Smg-3 and smg-4 are required for phosphorylation.

The protein resides in the cytoplasm. It catalyses the reaction ATP + H2O = ADP + phosphate + H(+). Functionally, RNA-dependent helicase required for nonsense-mediated decay (NMD) of aberrant mRNAs containing premature stop codons and modulates the expression level of normal mRNAs. Is recruited to mRNAs upon translation termination and undergoes a cycle of phosphorylation and dephosphorylation; its phosphorylation appears to be a key step in NMD. The formation of an smg-2-3-4 surveillance complex is believed to activate NMD. The polypeptide is Regulator of nonsense transcripts 1 (smg-2) (Caenorhabditis elegans).